The primary structure comprises 83 residues: Cytochrome b559 subunit alpha (83 aa).

The chain crosses the membrane as a helical span at residues 21–35 (VIHSITIPSLFIAGW). Residue H23 coordinates heme.

It belongs to the PsbE/PsbF family. As to quaternary structure, heterodimer of an alpha subunit and a beta subunit. PSII is composed of 1 copy each of membrane proteins PsbA, PsbB, PsbC, PsbD, PsbE, PsbF, PsbH, PsbI, PsbJ, PsbK, PsbL, PsbM, PsbT, PsbX, PsbY, PsbZ, Psb30/Ycf12, at least 3 peripheral proteins of the oxygen-evolving complex and a large number of cofactors. It forms dimeric complexes. The cofactor is heme b.

The protein resides in the plastid. The protein localises to the chloroplast thylakoid membrane. This b-type cytochrome is tightly associated with the reaction center of photosystem II (PSII). PSII is a light-driven water:plastoquinone oxidoreductase that uses light energy to abstract electrons from H(2)O, generating O(2) and a proton gradient subsequently used for ATP formation. It consists of a core antenna complex that captures photons, and an electron transfer chain that converts photonic excitation into a charge separation. The polypeptide is Cytochrome b559 subunit alpha (Piper cenocladum (Ant piper)).